The primary structure comprises 423 residues: Large ribosomal subunit protein mL37 (423 aa).

The transit peptide at 1–29 directs the protein to the mitochondrion; the sequence is MALASGPAMRALAGSARLGLGGYGAPKRG.

This sequence belongs to the mitochondrion-specific ribosomal protein mL37 family. In terms of assembly, component of the mitochondrial ribosome large subunit (39S) which comprises a 16S rRNA and about 50 distinct proteins.

It is found in the mitochondrion. The polypeptide is Large ribosomal subunit protein mL37 (Mrpl37) (Rattus norvegicus (Rat)).